A 376-amino-acid polypeptide reads, in one-letter code: Chanoclavine-I aldehyde reductase easA (376 aa).

Residues P29–T31, A64, Q106, and H173 each bind FMN. Substrate contacts are provided by H173 and N176. The active-site Proton donor is Y178. Residues K225, G297, G323–R324, and R324 contribute to the FMN site. Y351 is a substrate binding site.

It belongs to the NADH:flavin oxidoreductase/NADH oxidase family. It depends on FMN as a cofactor.

It carries out the reaction dihydrochanoclavine-I aldehyde + NADP(+) = chanoclavine-I aldehyde + NADPH + H(+). It participates in alkaloid biosynthesis; ergot alkaloid biosynthesis. Its function is as follows. Aldehyde reductase; part of the gene cluster that mediates the biosynthesis of fumiclavanine C, a fungal ergot alkaloid. DmaW catalyzes the first step of ergot alkaloid biosynthesis by condensing dimethylallyl diphosphate (DMAP) and tryptophan to form 4-dimethylallyl-L-tryptophan. The second step is catalyzed by the methyltransferase easF that methylates 4-dimethylallyl-L-tryptophan in the presence of S-adenosyl-L-methionine, resulting in the formation of 4-dimethylallyl-L-abrine. The catalase easC and the FAD-dependent oxidoreductase easE then transform 4-dimethylallyl-L-abrine to chanoclavine-I which is further oxidized by EasD in the presence of NAD(+), resulting in the formation of chanoclavine-I aldehyde. EasA reduces chanoclavine-I aldehyde to dihydrochanoclavine-I aldehyde that spontaneously dehydrates to form 6,8-dimethyl-6,7-didehydroergoline. EasG then catalyzes the reduction of 6,8-dimethyl-6,7-didehydroergoline to form festuclavine. Hydrolysis of festuclavine by easM then leads to the formation of fumigaclavine B which is in turn acetylated by easN to fumigaclavine A. Finally, easL catalyzes the conversion of fumigaclavine A into fumigaclavine C by attaching a dimethylallyl moiety to C-2 of the indole nucleus. The chain is Chanoclavine-I aldehyde reductase easA from Aspergillus fumigatus (strain ATCC MYA-4609 / CBS 101355 / FGSC A1100 / Af293) (Neosartorya fumigata).